A 240-amino-acid polypeptide reads, in one-letter code: Ubiquinone biosynthesis O-methyltransferase (240 aa).

Residues arginine 36, glycine 66, aspartate 87, and methionine 129 each coordinate S-adenosyl-L-methionine.

Belongs to the methyltransferase superfamily. UbiG/COQ3 family.

The catalysed reaction is a 3-demethylubiquinol + S-adenosyl-L-methionine = a ubiquinol + S-adenosyl-L-homocysteine + H(+). The enzyme catalyses a 3-(all-trans-polyprenyl)benzene-1,2-diol + S-adenosyl-L-methionine = a 2-methoxy-6-(all-trans-polyprenyl)phenol + S-adenosyl-L-homocysteine + H(+). The protein operates within cofactor biosynthesis; ubiquinone biosynthesis. Its function is as follows. O-methyltransferase that catalyzes the 2 O-methylation steps in the ubiquinone biosynthetic pathway. The protein is Ubiquinone biosynthesis O-methyltransferase of Pelagibacter ubique (strain HTCC1062).